Consider the following 143-residue polypeptide: Nucleoside diphosphate kinase (143 aa).

6 residues coordinate ATP: Lys11, Phe59, Arg87, Thr93, Arg104, and Asn114. His117 serves as the catalytic Pros-phosphohistidine intermediate.

Belongs to the NDK family. In terms of assembly, homotetramer. Requires Mg(2+) as cofactor.

The protein localises to the cytoplasm. The catalysed reaction is a 2'-deoxyribonucleoside 5'-diphosphate + ATP = a 2'-deoxyribonucleoside 5'-triphosphate + ADP. It catalyses the reaction a ribonucleoside 5'-diphosphate + ATP = a ribonucleoside 5'-triphosphate + ADP. Its function is as follows. Major role in the synthesis of nucleoside triphosphates other than ATP. The ATP gamma phosphate is transferred to the NDP beta phosphate via a ping-pong mechanism, using a phosphorylated active-site intermediate. This is Nucleoside diphosphate kinase from Sodalis glossinidius (strain morsitans).